Consider the following 689-residue polypeptide: ATP-dependent zinc metalloprotease FtsH 2 (689 aa).

The Cytoplasmic segment spans residues 1–3 (MRK). A helical transmembrane segment spans residues 4–24 (FFRGASFYILAFIIILFIVQN). Topologically, residues 25-111 (FGRPTQEIDE…SAAPPPTTPW (87 aa)) are extracellular. The helical transmembrane segment at 112–132 (FIELLPSIFMVLIFIVFWFVF) threads the bilayer. The Cytoplasmic segment spans residues 133–689 (MQQSQGGGNR…QDNEENRKEE (557 aa)). 205 to 212 (GPPGTGKT) contributes to the ATP binding site. Histidine 427 serves as a coordination point for Zn(2+). Glutamate 428 is an active-site residue. Residues histidine 431 and aspartate 503 each coordinate Zn(2+). The span at 661–673 (EELIEVSSDKEEE) shows a compositional bias: basic and acidic residues. The disordered stretch occupies residues 661 to 689 (EELIEVSSDKEEEKDNQDDQDNEENRKEE).

In the central section; belongs to the AAA ATPase family. This sequence in the C-terminal section; belongs to the peptidase M41 family. Homohexamer. Zn(2+) is required as a cofactor.

Its subcellular location is the cell membrane. Its function is as follows. Acts as a processive, ATP-dependent zinc metallopeptidase for both cytoplasmic and membrane proteins. Plays a role in the quality control of integral membrane proteins. This is ATP-dependent zinc metalloprotease FtsH 2 from Alkaliphilus metalliredigens (strain QYMF).